Here is a 637-residue protein sequence, read N- to C-terminus: Probable polypeptide N-acetylgalactosaminyltransferase 8 (637 aa).

Residues 1-6 (MMFWRK) lie on the Cytoplasmic side of the membrane. Residues 7-29 (LPKALFIGLTLAIAVNLLLVFSS) traverse the membrane as a helical; Signal-anchor for type II membrane protein segment. Over 30–637 (KGTLQNLFTG…VRDWGQTNSQ (608 aa)) the chain is Lumenal. Residues Asn85, Asn107, and Asn160 are each glycosylated (N-linked (GlcNAc...) asparagine). Cystine bridges form between Cys171–Cys404, Cys395–Cys474, Cys509–Cys525, Cys556–Cys571, and Cys599–Cys617. Positions 180 to 294 (LPSLSVILIF…VGWAEPILAR (115 aa)) are catalytic subdomain A. Residues Asp221 and Arg255 each coordinate substrate. Mn(2+) is bound by residues Asp278, His280, and His409. The tract at residues 351 to 412 (PVKSPSIMGI…PCSRIAHLER (62 aa)) is catalytic subdomain B. Substrate contacts are provided by Arg412 and Tyr417. Residues 496-634 (GYGRMKNLLD…QHTVRDWGQT (139 aa)) form the Ricin B-type lectin domain.

Belongs to the glycosyltransferase 2 family. GalNAc-T subfamily. It depends on Mn(2+) as a cofactor. As to expression, widely expressed. Expressed in heart, skeletal muscle, kidney, liver, small intestine and placenta. Weakly expressed in colon, thymus, spleen, lung and leukocyte.

The protein resides in the golgi apparatus membrane. The enzyme catalyses L-seryl-[protein] + UDP-N-acetyl-alpha-D-galactosamine = a 3-O-[N-acetyl-alpha-D-galactosaminyl]-L-seryl-[protein] + UDP + H(+). It carries out the reaction L-threonyl-[protein] + UDP-N-acetyl-alpha-D-galactosamine = a 3-O-[N-acetyl-alpha-D-galactosaminyl]-L-threonyl-[protein] + UDP + H(+). The protein operates within protein modification; protein glycosylation. Its function is as follows. Probably catalyzes the initial reaction in O-linked oligosaccharide biosynthesis, the transfer of an N-acetyl-D-galactosamine residue to a serine or threonine residue on the protein receptor. The sequence is that of Probable polypeptide N-acetylgalactosaminyltransferase 8 (GALNT8) from Homo sapiens (Human).